The sequence spans 117 residues: Ribonuclease P protein component (117 aa).

Belongs to the RnpA family. Consists of a catalytic RNA component (M1 or rnpB) and a protein subunit.

The enzyme catalyses Endonucleolytic cleavage of RNA, removing 5'-extranucleotides from tRNA precursor.. Functionally, RNaseP catalyzes the removal of the 5'-leader sequence from pre-tRNA to produce the mature 5'-terminus. It can also cleave other RNA substrates such as 4.5S RNA. The protein component plays an auxiliary but essential role in vivo by binding to the 5'-leader sequence and broadening the substrate specificity of the ribozyme. This chain is Ribonuclease P protein component, found in Nocardioides sp. (strain ATCC BAA-499 / JS614).